Here is a 368-residue protein sequence, read N- to C-terminus: Core histone macro-H2A.1 (368 aa).

A Histone H2A domain is found at 2-117 (SSRGGKKKST…NIHPELLAKK (116 aa)). 2 positions are modified to N6-lactoyllysine; alternate: K7 and K9. Residue K18 is modified to N6-methyllysine. K116 is subject to N6-acetyllysine; alternate. A Glycyl lysine isopeptide (Lys-Gly) (interchain with G-Cter in ubiquitin); alternate cross-link involves residue K116. A Glycyl lysine isopeptide (Lys-Gly) (interchain with G-Cter in ubiquitin) cross-link involves residue K117. K123 bears the N6-acetyllysine; alternate mark. K123 is subject to N6,N6-dimethyllysine; alternate. A Glycyl lysine isopeptide (Lys-Gly) (interchain with G-Cter in SUMO2); alternate cross-link involves residue K123. Residues 128–179 (ITPPPAKKAKSPSQKKPVAKKTGGKKGARKSKKQGEVSKAASADSTTEGAPT) are disordered. T129 is subject to Phosphothreonine. Residues 144-159 (PVAKKTGGKKGARKSK) are compositionally biased toward basic residues. K166 participates in a covalent cross-link: Glycyl lysine isopeptide (Lys-Gly) (interchain with G-Cter in SUMO2). S169 and S172 each carry phosphoserine. The region spanning 183-366 (TVLSTKSLFL…IYVQEMAKLD (184 aa)) is the Macro domain. A Glycyl lysine isopeptide (Lys-Gly) (interchain with G-Cter in SUMO2) cross-link involves residue K188. D202, I203, V225, S274, G311, S312, G313, and N315 together coordinate a glycoprotein. A Glycyl lysine isopeptide (Lys-Gly) (interchain with G-Cter in SUMO2) cross-link involves residue K319.

The protein belongs to the histone H2A family. The nucleosome is a histone octamer containing two molecules each of H2A, H2B, H3 and H4 assembled in one H3-H4 heterotetramer and two H2A-H2B heterodimers. Interacts with HDAC1 and HDAC2. Interacts with SPOP. Part of a complex consisting of MACROH2A1, CUL3 and SPOP. In terms of assembly, interacts with PARP1. Post-translationally, monoubiquitinated at either Lys-116 or Lys-117. May also be polyubiquitinated. Ubiquitination is mediated by the CUL3/SPOP E3 complex and does not promote proteasomal degradation. Instead, it is required for enrichment in inactive X chromosome chromatin. As to expression, present only in liver and brain (at protein level). Present in brain, thymus, testis, liver and kidney (at protein level).

Its subcellular location is the nucleus. The protein localises to the chromosome. In terms of biological role, variant histone H2A which replaces conventional H2A in a subset of nucleosomes where it represses transcription. Nucleosomes wrap and compact DNA into chromatin, limiting DNA accessibility to the cellular machineries which require DNA as a template. Histones thereby play a central role in transcription regulation, DNA repair, DNA replication and chromosomal stability. DNA accessibility is regulated via a complex set of post-translational modifications of histones, also called histone code, and nucleosome remodeling. Involved in stable X chromosome inactivation. Inhibits the binding of transcription factors, including NF-kappa-B, and interferes with the activity of remodeling SWI/SNF complexes. Inhibits histone acetylation by EP300 and recruits class I HDACs, which induces a hypoacetylated state of chromatin. Isoform that specifically binds poly-ADP-ribose and O-acetyl-ADP-ribose and plays a key role in NAD(+) metabolism. Able to bind to the ends of poly-ADP-ribose chains created by PARP1 and cap them. This prevents PARP1 from further addition of ADP-ribose and thus limits the consumption of nuclear NAD(+), allowing the cell to maintain proper NAD(+) levels in both the nucleus and the mitochondria to promote proper mitochondrial respiration. Increases the expression of genes involved in redox metabolism, including SOD3. Its function is as follows. In contrast to isoform 1, does not bind poly-ADP-ribose. Represses SOD3 gene expression. The protein is Core histone macro-H2A.1 of Rattus norvegicus (Rat).